Here is a 456-residue protein sequence, read N- to C-terminus: Anthocyanidin 3-O-galactosyltransferase F3GT1 (456 aa).

An anthocyanidin is bound by residues S20, H22, and Q83. H22 acts as the Proton acceptor in catalysis. The active-site Charge relay is D118. H150 is a binding site for an anthocyanidin. Residues S281, W333, A334, H351, N355, S356, and E359 each contribute to the UDP site. G374 serves as a coordination point for an anthocyanidin.

It belongs to the UDP-glycosyltransferase family. Expressed at low levels in stems and leaves. Expressed in ovaries.

It carries out the reaction cyanidin + UDP-alpha-D-galactose = cyanidin 3-O-beta-D-galactoside + UDP + H(+). It participates in pigment biosynthesis; anthocyanin biosynthesis. Functionally, involved in anthocyanin biosynthesis by catalyzing the galactosylation of cyanidin. Required for the accumulation of anthocyanin in red-fleshed kiwifruit varieties. Seems to be the key enzyme regulating the accumulation of anthocyanin in red-fleshed kiwi fruits. The sequence is that of Anthocyanidin 3-O-galactosyltransferase F3GT1 from Actinidia chinensis var. chinensis (Chinese soft-hair kiwi).